Reading from the N-terminus, the 265-residue chain is Polyprenol monophosphomannose synthase (265 aa).

The segment covering 1–10 (MSVPGEREQG) has biased composition (basic and acidic residues). The disordered stretch occupies residues 1-21 (MSVPGEREQGAGEDPATVRPT).

Belongs to the glycosyltransferase 2 family. As to quaternary structure, interacts with Lnt (also called Ppm2, AC A0QZ13) upon coexpression in E.coli, which increases the PPM synthase activity of this protein.

It localises to the cytoplasm. The enzyme catalyses a di-trans,poly-cis-dolichyl phosphate + GDP-alpha-D-mannose = a di-trans,poly-cis-dolichyl beta-D-mannosyl phosphate + GDP. Functionally, transfers mannose from GDP-mannose to lipid acceptors to form polyprenol monophosphomannose (PPM); catalytic activity in vitro is enhanced by Lnt (AC A0QZ13). PMM is an alkai-stable sugar donor which adds mannose-phosphate residues to triacylated-PIM2, eventually leading to generation of the cell wall glycolipid lipoglycan modulins lipoarabinomannan (LAM) and lipomannan (LM). The sequence is that of Polyprenol monophosphomannose synthase from Mycolicibacterium smegmatis (strain ATCC 700084 / mc(2)155) (Mycobacterium smegmatis).